The sequence spans 221 residues: Vesicle-associated membrane protein 713 (221 aa).

Alanine 2 is subject to N-acetylalanine. Residues 2–190 (AIIFALVARG…RTIMWWRNVK (189 aa)) lie on the Cytoplasmic side of the membrane. Residues 7–112 (LVARGTVVLS…SMNDEFSRVL (106 aa)) enclose the Longin domain. The v-SNARE coiled-coil homology domain occupies 127–187 (RMSRIKGEMS…RRYRTIMWWR (61 aa)). The helical; Anchor for type IV membrane protein transmembrane segment at 191–211 (LTIALILVLALVVYIAMAFVC) threads the bilayer. Residues 212 to 221 (HGPSLPSCFK) are Vesicular-facing.

This sequence belongs to the synaptobrevin family. In terms of assembly, interacts with subunits of the vacuole protein sorting (HOPS) complex including VPS11, VCL1, VPS18, VPS33, VPS39 and VPS41. Highly expressed in stems and roots. Detected in flowers and leaves.

The protein resides in the vacuole membrane. It localises to the prevacuolar compartment membrane. In terms of biological role, involved in the targeting and/or fusion of transport vesicles to their target membrane. The chain is Vesicle-associated membrane protein 713 from Arabidopsis thaliana (Mouse-ear cress).